Consider the following 64-residue polypeptide: Cytochrome c oxidase subunit 2 (64 aa).

Residues 1 to 14 lie on the Mitochondrial intermembrane side of the membrane; that stretch reads MAHPSQLGFQDAAS. Residues 15–45 traverse the membrane as a helical segment; it reads PVMEELXHFHDHTLMIVFLISTLVXYIIVAM. At 46–64 the chain is on the mitochondrial matrix side; it reads VSTKLTNKYVLDSQEIEIV.

This sequence belongs to the cytochrome c oxidase subunit 2 family. Component of the cytochrome c oxidase (complex IV, CIV), a multisubunit enzyme composed of 14 subunits. The complex is composed of a catalytic core of 3 subunits MT-CO1, MT-CO2 and MT-CO3, encoded in the mitochondrial DNA, and 11 supernumerary subunits COX4I, COX5A, COX5B, COX6A, COX6B, COX6C, COX7A, COX7B, COX7C, COX8 and NDUFA4, which are encoded in the nuclear genome. The complex exists as a monomer or a dimer and forms supercomplexes (SCs) in the inner mitochondrial membrane with NADH-ubiquinone oxidoreductase (complex I, CI) and ubiquinol-cytochrome c oxidoreductase (cytochrome b-c1 complex, complex III, CIII), resulting in different assemblies (supercomplex SCI(1)III(2)IV(1) and megacomplex MCI(2)III(2)IV(2)). Found in a complex with TMEM177, COA6, COX18, COX20, SCO1 and SCO2. Interacts with TMEM177 in a COX20-dependent manner. Interacts with COX20. Interacts with COX16. It depends on Cu cation as a cofactor.

Its subcellular location is the mitochondrion inner membrane. The catalysed reaction is 4 Fe(II)-[cytochrome c] + O2 + 8 H(+)(in) = 4 Fe(III)-[cytochrome c] + 2 H2O + 4 H(+)(out). In terms of biological role, component of the cytochrome c oxidase, the last enzyme in the mitochondrial electron transport chain which drives oxidative phosphorylation. The respiratory chain contains 3 multisubunit complexes succinate dehydrogenase (complex II, CII), ubiquinol-cytochrome c oxidoreductase (cytochrome b-c1 complex, complex III, CIII) and cytochrome c oxidase (complex IV, CIV), that cooperate to transfer electrons derived from NADH and succinate to molecular oxygen, creating an electrochemical gradient over the inner membrane that drives transmembrane transport and the ATP synthase. Cytochrome c oxidase is the component of the respiratory chain that catalyzes the reduction of oxygen to water. Electrons originating from reduced cytochrome c in the intermembrane space (IMS) are transferred via the dinuclear copper A center (CU(A)) of subunit 2 and heme A of subunit 1 to the active site in subunit 1, a binuclear center (BNC) formed by heme A3 and copper B (CU(B)). The BNC reduces molecular oxygen to 2 water molecules using 4 electrons from cytochrome c in the IMS and 4 protons from the mitochondrial matrix. The protein is Cytochrome c oxidase subunit 2 (mt-co2) of Scaphirhynchus platorynchus (Shovelnose sturgeon).